A 525-amino-acid polypeptide reads, in one-letter code: Chromosomal replication initiator protein DnaA (525 aa).

The tract at residues 1–71 is domain I, interacts with DnaA modulators; that stretch reads MNDFWQHCSA…SDLARDFWNA (71 aa). The segment at 71 to 188 is domain II; sequence APIEVQFVLD…GEADSMYERS (118 aa). The tract at residues 160 to 182 is disordered; it reads AAAGRRTWRPGPGAAPANGGEAD. Residues 169–181 are compositionally biased toward low complexity; that stretch reads PGPGAAPANGGEA. A domain III, AAA+ region region spans residues 189–405; sequence KLNPVLTFDN…GALRKILAYS (217 aa). Residues Gly-233, Gly-235, Lys-236, and Thr-237 each coordinate ATP. The tract at residues 406–525 is domain IV, binds dsDNA; it reads KFHGREISIE…LHVLEQTLKG (120 aa).

The protein belongs to the DnaA family. As to quaternary structure, oligomerizes as a right-handed, spiral filament on DNA at oriC.

The protein resides in the cytoplasm. In terms of biological role, plays an essential role in the initiation and regulation of chromosomal replication. ATP-DnaA binds to the origin of replication (oriC) to initiate formation of the DNA replication initiation complex once per cell cycle. Binds the DnaA box (a 9 base pair repeat at the origin) and separates the double-stranded (ds)DNA. Forms a right-handed helical filament on oriC DNA; dsDNA binds to the exterior of the filament while single-stranded (ss)DNA is stabiized in the filament's interior. The ATP-DnaA-oriC complex binds and stabilizes one strand of the AT-rich DNA unwinding element (DUE), permitting loading of DNA polymerase. After initiation quickly degrades to an ADP-DnaA complex that is not apt for DNA replication. Binds acidic phospholipids. The sequence is that of Chromosomal replication initiator protein DnaA from Burkholderia ambifaria (strain ATCC BAA-244 / DSM 16087 / CCUG 44356 / LMG 19182 / AMMD) (Burkholderia cepacia (strain AMMD)).